The chain runs to 534 residues: 2,3-bisphosphoglycerate-independent phosphoglycerate mutase (534 aa).

2 residues coordinate Mn(2+): aspartate 15 and serine 65. Catalysis depends on serine 65, which acts as the Phosphoserine intermediate. Substrate-binding positions include histidine 126, 156–157, arginine 188, arginine 194, 261–264, and lysine 334; these read RD and RPDR. The Mn(2+) site is built by aspartate 401, histidine 405, aspartate 442, histidine 443, and histidine 460.

It belongs to the BPG-independent phosphoglycerate mutase family. It depends on Mn(2+) as a cofactor.

It localises to the plastid. The protein localises to the chloroplast. The enzyme catalyses (2R)-2-phosphoglycerate = (2R)-3-phosphoglycerate. Its pathway is carbohydrate degradation; glycolysis; pyruvate from D-glyceraldehyde 3-phosphate: step 3/5. Functionally, catalyzes the interconversion of 2-phosphoglycerate and 3-phosphoglycerate. This chain is 2,3-bisphosphoglycerate-independent phosphoglycerate mutase, found in Pyropia yezoensis (Susabi-nori).